We begin with the raw amino-acid sequence, 306 residues long: Aspartate carbamoyltransferase catalytic subunit (306 aa).

Carbamoyl phosphate is bound by residues arginine 55 and threonine 56. L-aspartate is bound at residue lysine 84. Residues arginine 105, histidine 133, and glutamine 136 each contribute to the carbamoyl phosphate site. L-aspartate-binding residues include arginine 166 and arginine 227. The carbamoyl phosphate site is built by leucine 265 and proline 266.

Belongs to the aspartate/ornithine carbamoyltransferase superfamily. ATCase family. In terms of assembly, heterododecamer (2C3:3R2) of six catalytic PyrB chains organized as two trimers (C3), and six regulatory PyrI chains organized as three dimers (R2).

It catalyses the reaction carbamoyl phosphate + L-aspartate = N-carbamoyl-L-aspartate + phosphate + H(+). It participates in pyrimidine metabolism; UMP biosynthesis via de novo pathway; (S)-dihydroorotate from bicarbonate: step 2/3. Catalyzes the condensation of carbamoyl phosphate and aspartate to form carbamoyl aspartate and inorganic phosphate, the committed step in the de novo pyrimidine nucleotide biosynthesis pathway. The protein is Aspartate carbamoyltransferase catalytic subunit of Neisseria meningitidis serogroup A / serotype 4A (strain DSM 15465 / Z2491).